The primary structure comprises 708 residues: tRNA(Met) cytidine acetyltransferase TmcA (708 aa).

Residues Q189, 215-224, and R357 each bind ATP; that span reads GRGKTSALGL. Residues 398–574 enclose the N-acetyltransferase domain; that stretch reads PECVEQPERL…YSLLMVRGEH (177 aa). Acetyl-CoA contacts are provided by residues 502–504 and 509–515; these read IAV and QRQGIGS.

This sequence belongs to the RNA cytidine acetyltransferase family. TmcA subfamily.

It localises to the cytoplasm. It carries out the reaction cytidine(34) in elongator tRNA(Met) + acetyl-CoA + ATP + H2O = N(4)-acetylcytidine(34) in elongator tRNA(Met) + ADP + phosphate + CoA + H(+). In terms of biological role, catalyzes the formation of N(4)-acetylcytidine (ac(4)C) at the wobble position of tRNA(Met), by using acetyl-CoA as an acetyl donor and ATP (or GTP). This is tRNA(Met) cytidine acetyltransferase TmcA from Vibrio cholerae serotype O1 (strain ATCC 39315 / El Tor Inaba N16961).